The following is a 1027-amino-acid chain: D-2-hydroxyglutarate dehydrogenase (1027 aa).

Residues Tyr48–Ile284 enclose the FAD-binding PCMH-type domain. Arg405 and His503 together coordinate (R)-2-hydroxyglutarate. One can recognise a 4Fe-4S ferredoxin-type domain in the interval His665–Lys696. Residues Cys674, Cys677, Cys680, and Cys684 each coordinate [4Fe-4S] cluster.

This sequence in the N-terminal section; belongs to the FAD-binding oxidoreductase/transferase type 4 family. Homotetramer. Requires [4Fe-4S] cluster as cofactor. FAD is required as a cofactor.

The catalysed reaction is (R)-2-hydroxyglutarate + A = 2-oxoglutarate + AH2. Its function is as follows. Catalyzes the oxidation of D-2-hydroxyglutarate (D-2-HGA) to 2-oxoglutarate. Provides the way to recycle D-2-HGA produced during L-serine synthesis by SerA, by converting it back to 2-oxoglutarate. The physiological molecule that functions as the primary electron acceptor during D-2-HGA oxidation is unknown. The sequence is that of D-2-hydroxyglutarate dehydrogenase from Haemophilus influenzae (strain ATCC 51907 / DSM 11121 / KW20 / Rd).